A 482-amino-acid chain; its full sequence is U2 small nuclear ribonucleoprotein auxiliary factor 35 kDa subunit-related protein 2 (482 aa).

Residues 1–59 (MAAPEKMTFPEKPSHKKYRAALKKEKRKKRRQELARLRDSGLSQKEEEEDTFIEEQQLE) form a disordered region. Residues 14–31 (SHKKYRAALKKEKRKKRR) are compositionally biased toward basic residues. Lysine 45 participates in a covalent cross-link: Glycyl lysine isopeptide (Lys-Gly) (interchain with G-Cter in SUMO2). Acidic residues predominate over residues 46 to 58 (EEEEDTFIEEQQL). A Glycyl lysine isopeptide (Lys-Gly) (interchain with G-Cter in SUMO2) cross-link involves residue lysine 62. Residues 115–135 (QRKEREEEEQKRQEKKEKEEA) are disordered. A C3H1-type 1 zinc finger spans residues 166–194 (EKDRANCPFYSKTGACRFGDRCSRKHNFP). Residues 198–304 (PTLLIKSMFT…RQLQCEFCPV (107 aa)) form the RRM domain. The C3H1-type 2 zinc-finger motif lies at 306-333 (RWKMAICGLFEIQQCPRGKHCNFLHVFR). Serine 349 carries the phosphoserine modification. Residues 351-482 (DRTGSSFGKN…DRTVQSPKSK (132 aa)) form a disordered region. Basic and acidic residues-rich tracts occupy residues 360-375 (NSERRERMGHHDDYYS) and 383-398 (PSPDHSYKRNGESERK). Serine 384 carries the post-translational modification Phosphoserine. Residues 399 to 412 (SSRHRGKKSHKRTS) show a composition bias toward basic residues. Over residues 413–435 (KSRERHNSRSRGRNRDRSRDRSR) the composition is skewed to basic and acidic residues. Positions 436–454 (GRGSRSRSRSRSRRSRRSR) are enriched in basic residues.

Component of the U11/U12 snRNPs that are part of the U12-type spliceosome. Interacts (via RS domain) with SRSF1 and SRSF2. Interacts with U2AF2/U2AF65. Phosphorylated in the RS domain by SRPK1. As to expression, widely expressed.

It is found in the nucleus. In terms of biological role, pre-mRNA-binding protein required for splicing of both U2- and U12-type introns. Selectively interacts with the 3'-splice site of U2- and U12-type pre-mRNAs and promotes different steps in U2 and U12 intron splicing. Recruited to U12 pre-mRNAs in an ATP-dependent manner and is required for assembly of the pre-spliceosome, a precursor to other spliceosomal complexes. For U2-type introns, it is selectively and specifically required for the second step of splicing. This chain is U2 small nuclear ribonucleoprotein auxiliary factor 35 kDa subunit-related protein 2 (ZRSR2), found in Homo sapiens (Human).